We begin with the raw amino-acid sequence, 1167 residues long: White collar 1 protein (1167 aa).

2 disordered regions span residues 1 to 91 and 307 to 355; these read MNNN…MSGG and STPA…GASQ. The span at 21 to 57 shows a compositional bias: low complexity; the sequence is QHQQQQQQQQQQQQQQQQQQQQQQQQQQQQHQHQQQQ. Polar residues-rich tracts occupy residues 70–91 and 307–325; these read TPPT…MSGG and STPA…TQTI. The segment covering 335-348 has biased composition (low complexity); sequence VTNAPTPAPFTSTP. One can recognise a PAS 1 domain in the interval 381–452; it reads KLKLGAVDMS…KREFVENNAV (72 aa). S-4a-FMN cysteine is present on C428. Residues 469–508 enclose the PAC 1 domain; that stretch reads LINYRKGGKPFLNLLTMIPIPWDTEEIRYFIGFQIDLVEC. One can recognise a PAS 2 domain in the interval 574-644; that stretch reads KQSWDKMLLE…RELKEAQQHT (71 aa). The 42-residue stretch at 650–691 folds into the PAC 2 domain; the sequence is FRIRRKNSGYTWFESHGTLFNEQGKGRKCIILVGRKRPVFAL. Residues 693 to 763 form the PAS 3 domain; it reads RKDLELNGGI…RTIEKARKGK (71 aa). Residues 849-861 show a composition bias toward low complexity; it reads MSKSGSSDSTGAM. 4 disordered regions span residues 849–872, 918–952, 966–1047, and 1060–1167; these read MSKS…GPGQ, KKKR…PSGN, QTGR…TGST, and VNAL…GLSV. A GATA-type zinc finger spans residues 934-959; the sequence is CANCHTRNTPEWRRGPSGNRDLCNSC. A compositionally biased stretch (polar residues) spans 968 to 977; it reads GRVSPRTSSR. The segment covering 986–995 has biased composition (low complexity); that stretch reads KKSNSPSHSS. Residues 1004–1033 show a composition bias toward polar residues; the sequence is DSPSTTTATKNSPSLRGSSTTAPGTITTDS. Composition is skewed to low complexity over residues 1036-1047 and 1104-1128; these read AVASSASGTGST and QHQQ…QQHQ.

As to quaternary structure, heterodimer of wc-1 and wc-2. Post-translationally, FMN binds covalently to cysteine after exposure to blue light and is reversed in the dark.

The protein resides in the nucleus. Functionally, may function as a transcription factor involved in light regulation. Binds and affects blue light regulation of the al-3 gene. Wc-1 and wc-2 proteins interact via homologous PAS domains, bind to promoters of light regulated genes such as frq, and activate transcription. This chain is White collar 1 protein (wc-1), found in Neurospora crassa (strain ATCC 24698 / 74-OR23-1A / CBS 708.71 / DSM 1257 / FGSC 987).